Here is a 273-residue protein sequence, read N- to C-terminus: 4-hydroxy-tetrahydrodipicolinate reductase (273 aa).

Residues 8–13 (GALGRM), aspartate 35, 103–105 (GTT), and 129–132 (SQNY) contribute to the NAD(+) site. Histidine 161 functions as the Proton donor/acceptor in the catalytic mechanism. Residue histidine 162 coordinates (S)-2,3,4,5-tetrahydrodipicolinate. Lysine 165 acts as the Proton donor in catalysis. 171–172 (GT) lines the (S)-2,3,4,5-tetrahydrodipicolinate pocket.

It belongs to the DapB family.

It is found in the cytoplasm. The enzyme catalyses (S)-2,3,4,5-tetrahydrodipicolinate + NAD(+) + H2O = (2S,4S)-4-hydroxy-2,3,4,5-tetrahydrodipicolinate + NADH + H(+). It carries out the reaction (S)-2,3,4,5-tetrahydrodipicolinate + NADP(+) + H2O = (2S,4S)-4-hydroxy-2,3,4,5-tetrahydrodipicolinate + NADPH + H(+). It participates in amino-acid biosynthesis; L-lysine biosynthesis via DAP pathway; (S)-tetrahydrodipicolinate from L-aspartate: step 4/4. Functionally, catalyzes the conversion of 4-hydroxy-tetrahydrodipicolinate (HTPA) to tetrahydrodipicolinate. The polypeptide is 4-hydroxy-tetrahydrodipicolinate reductase (Methanococcus aeolicus (strain ATCC BAA-1280 / DSM 17508 / OCM 812 / Nankai-3)).